The following is an 89-amino-acid chain: Small ribosomal subunit protein uS15 (89 aa).

This sequence belongs to the universal ribosomal protein uS15 family. Part of the 30S ribosomal subunit. Forms a bridge to the 50S subunit in the 70S ribosome, contacting the 23S rRNA.

One of the primary rRNA binding proteins, it binds directly to 16S rRNA where it helps nucleate assembly of the platform of the 30S subunit by binding and bridging several RNA helices of the 16S rRNA. In terms of biological role, forms an intersubunit bridge (bridge B4) with the 23S rRNA of the 50S subunit in the ribosome. The sequence is that of Small ribosomal subunit protein uS15 from Hyphomonas neptunium (strain ATCC 15444).